Here is a 218-residue protein sequence, read N- to C-terminus: Protein Syd (218 aa).

The protein belongs to the Syd family.

It is found in the cell inner membrane. In terms of biological role, interacts with the SecY protein in vivo. May bind preferentially to an uncomplexed state of SecY, thus functioning either as a chelating agent for excess SecY in the cell or as a regulatory factor that negatively controls the translocase function. The sequence is that of Protein Syd from Shewanella denitrificans (strain OS217 / ATCC BAA-1090 / DSM 15013).